The primary structure comprises 856 residues: FO synthase (856 aa).

Radical SAM core domains are found at residues 84–336 and 544–785; these read ISYS…APPN and VTFV…SHIQ. Residues 85–417 form a cofG-like region; it reads SYSRKVFIPV…PRVRGHVVAL (333 aa). [4Fe-4S] cluster is bound by residues Cys98, Cys102, Cys105, Cys558, Cys562, and Cys565. The tract at residues 521–854 is cofH-like; it reads DGPALEAVAA…RQRTTTYALL (334 aa).

This sequence in the N-terminal section; belongs to the radical SAM superfamily. CofG family. In the C-terminal section; belongs to the radical SAM superfamily. CofH family. The cofactor is [4Fe-4S] cluster.

It catalyses the reaction 5-amino-6-(D-ribitylamino)uracil + L-tyrosine + S-adenosyl-L-methionine = 5-amino-5-(4-hydroxybenzyl)-6-(D-ribitylimino)-5,6-dihydrouracil + 2-iminoacetate + 5'-deoxyadenosine + L-methionine + H(+). The enzyme catalyses 5-amino-5-(4-hydroxybenzyl)-6-(D-ribitylimino)-5,6-dihydrouracil + S-adenosyl-L-methionine = 7,8-didemethyl-8-hydroxy-5-deazariboflavin + 5'-deoxyadenosine + L-methionine + NH4(+) + H(+). Its pathway is cofactor biosynthesis; coenzyme F0 biosynthesis. Its function is as follows. Catalyzes the radical-mediated synthesis of 7,8-didemethyl-8-hydroxy-5-deazariboflavin (FO) from 5-amino-6-(D-ribitylamino)uracil and L-tyrosine. This is FO synthase (fbiC) from Mycobacterium bovis (strain ATCC BAA-935 / AF2122/97).